A 362-amino-acid chain; its full sequence is GTPase Obg (362 aa).

In terms of domain architecture, Obg spans 1 to 159 (MKFIDEARIE…RKLKLELKVL (159 aa)). Positions 129 to 148 (HFKSSTNRAPRQKTNGKEGE) are disordered. Polar residues predominate over residues 130–141 (FKSSTNRAPRQK). The OBG-type G domain occupies 160 to 334 (ADVGLLGMPN…LCYALQDYLD (175 aa)). GTP contacts are provided by residues 166–173 (GMPNAGKS), 191–195 (FTTLH), 213–216 (DIPG), 284–287 (NKVD), and 315–317 (SAL). Ser-173 and Thr-193 together coordinate Mg(2+). The disordered stretch occupies residues 340-362 (RDDAEERAADPRYQDQAADKSPD).

Belongs to the TRAFAC class OBG-HflX-like GTPase superfamily. OBG GTPase family. In terms of assembly, monomer. Requires Mg(2+) as cofactor.

Its subcellular location is the cytoplasm. An essential GTPase which binds GTP, GDP and possibly (p)ppGpp with moderate affinity, with high nucleotide exchange rates and a fairly low GTP hydrolysis rate. Plays a role in control of the cell cycle, stress response, ribosome biogenesis and in those bacteria that undergo differentiation, in morphogenesis control. The polypeptide is GTPase Obg (Polynucleobacter asymbioticus (strain DSM 18221 / CIP 109841 / QLW-P1DMWA-1) (Polynucleobacter necessarius subsp. asymbioticus)).